We begin with the raw amino-acid sequence, 425 residues long: High-affinity branched-chain amino acid transport system permease protein LivM (425 aa).

Helical transmembrane passes span 6–26 (IAMA…FMGV), 45–65 (WQWV…RPAF), 92–112 (FLVA…RGTV), 120–140 (IYII…LLVL), 145–165 (FYAI…LGFW), 167–187 (CLPI…FPVL), 191–211 (GDYL…LLLN), 260–280 (RVIF…FVIN), 311–331 (IKLT…TLFA), 353–373 (IVVL…ILLV), and 387–407 (MLML…GLLP).

The protein belongs to the binding-protein-dependent transport system permease family. LivHM subfamily.

It localises to the cell inner membrane. Functionally, part of the binding-protein-dependent transport system for branched-chain amino acids. Probably responsible for the translocation of the substrates across the membrane. The chain is High-affinity branched-chain amino acid transport system permease protein LivM (livM) from Escherichia coli (strain K12).